The sequence spans 25 residues: uncharacterized protein (25 aa).

The protein localises to the plastid. It localises to the chloroplast. This is an uncharacterized protein from Trieres chinensis (Marine centric diatom).